The chain runs to 356 residues: Peptide chain release factor 1 (356 aa).

Gln235 is subject to N5-methylglutamine.

This sequence belongs to the prokaryotic/mitochondrial release factor family. Methylated by PrmC. Methylation increases the termination efficiency of RF1.

The protein resides in the cytoplasm. Peptide chain release factor 1 directs the termination of translation in response to the peptide chain termination codons UAG and UAA. In Mycobacteroides abscessus (strain ATCC 19977 / DSM 44196 / CCUG 20993 / CIP 104536 / JCM 13569 / NCTC 13031 / TMC 1543 / L948) (Mycobacterium abscessus), this protein is Peptide chain release factor 1.